Here is a 103-residue protein sequence, read N- to C-terminus: UPF0145 protein Dred_2155 (103 aa).

This sequence belongs to the UPF0145 family.

In Desulforamulus reducens (strain ATCC BAA-1160 / DSM 100696 / MI-1) (Desulfotomaculum reducens), this protein is UPF0145 protein Dred_2155.